Reading from the N-terminus, the 628-residue chain is MRPIPSILGALGAFATLSAAAPLESTLYGPGASHARSMLGSSFGVPGNQTFDYVVIGGGTAGLAIASRLAEQGAGTVAVIEAGGFYELNNGNLSQIPANDAYYVGKDLDDWQPGVDWGFHTVPQAGAYGRASHYARGKCLGGSSARNYMAYQRGTKSSYQRWADMVGDQSYAWENFLPFFEKSLHFTPANDALRGANATVQYDPAVLGNGQGPLSVTYSHYVQSFATWAQKAFLEMGLAVRNCFQSGELLGQSFGMYTINATTMHRESSETSFLRRALAYPNFMVFQSTLAKRILFDGKKRAVAVQLDTQGYRYTLTARKEVVLSAGAFQSPQLLMVSGVGPAATLQQHGIPLVADRPGVGQNLQDHIIYAPSYRVDLITQSALLNATFEAQANRDYHERAAGIYANPTSDILAWEKIPEPKRSAWLSNTTRRALAQYPADWPEIEFLTMGGFFGYQNNYVRDNPSDGYNYASLAVSLCTPRSRGNVSIASADAAVPPLINPNWLTDPVDVELAVAAFKRARDFFGTSALKPVLIGDEYFPGERVATDAQIEDHVRKSFDTIFHASCTCAMGKREDQMAVVDSKARVIGVDALRVVDASAFPMLPPGHPQSTIYALAEKIACDISGAC.

An N-terminal signal peptide occupies residues 1–20 (MRPIPSILGALGAFATLSAA). An N-linked (GlcNAc...) asparagine glycan is attached at Asn48. FAD contacts are provided by residues 60-61 (TA) and 81-82 (EA). Asn92 carries an N-linked (GlcNAc...) asparagine glycan. 147–150 (NYMA) serves as a coordination point for FAD. Residues Asn197, Asn260, Asn386, Asn429, and Asn486 are each glycosylated (N-linked (GlcNAc...) asparagine). His564 (proton acceptor) is an active-site residue. FAD contacts are provided by residues Ala598 and 609–610 (PQ).

The protein belongs to the GMC oxidoreductase family. Homodimer. FAD is required as a cofactor.

It localises to the cytoplasm. The protein resides in the cell cortex. It is found in the vacuole. The protein localises to the secreted. Its subcellular location is the cell wall. It catalyses the reaction (E)-ascladiol + A = patulin + AH2. It functions in the pathway mycotoxin biosynthesis; patulin biosynthesis. Its function is as follows. Patulin synthase; part of the gene cluster that mediates the biosynthesis of patulin, an acetate-derived tetraketide mycotoxin produced by several fungal species that shows antimicrobial properties against several bacteria. PatE catalyzes the last step of the pathway which is the conversion of E-ascladiol to patulin. The pathway begins with the synthesis of 6-methylsalicylic acid by the polyketide synthase (PKS) patK via condensation of acetate and malonate units. The 6-methylsalicylic acid decarboxylase patG then catalyzes the decarboxylation of 6-methylsalicylic acid to yield m-cresol (also known as 3-methylphenol). These first reactions occur in the cytosol. The intermediate m-cresol is then transported into the endoplasmic reticulum where the cytochrome P450 monooxygenase patH converts it to m-hydroxybenzyl alcohol, which is further converted to gentisyl alcohol by the cytochrome P450 monooxygenase patI. The oxidoreductases patJ and patO further convert gentisyl alcohol to isoepoxydon in the vacuole. PatN catalyzes then the transformation of isoepoxydon into phyllostine. The cluster protein patF is responsible for the conversion from phyllostine to neopatulin whereas the alcohol dehydrogenase patD converts neopatulin to E-ascladiol. The steps between isoepoxydon and E-ascladiol occur in the cytosol, and E-ascladiol is probably secreted to the extracellular space by one of the cluster-specific transporters patC or patM. Finally, the secreted patulin synthase patE catalyzes the conversion of E-ascladiol to patulin. In Aspergillus clavatus (strain ATCC 1007 / CBS 513.65 / DSM 816 / NCTC 3887 / NRRL 1 / QM 1276 / 107), this protein is Patulin synthase.